Here is a 318-residue protein sequence, read N- to C-terminus: L-malyl-CoA/beta-methylmalyl-CoA lyase (318 aa).

Residues phenylalanine 19, arginine 24, lysine 30, and arginine 76 each coordinate substrate. Residues glutamate 141 and aspartate 168 each coordinate Mg(2+). Residues 167-168 (AD) and 251-252 (IH) contribute to the substrate site.

Belongs to the HpcH/HpaI aldolase family. In terms of assembly, homohexamer. Dimer of trimers. Mg(2+) is required as a cofactor. It depends on Mn(2+) as a cofactor.

The catalysed reaction is (S)-malyl-CoA = glyoxylate + acetyl-CoA. It carries out the reaction (2R,3S)-beta-methylmalyl-CoA = propanoyl-CoA + glyoxylate. In vitro inhibited by EDTA. Its function is as follows. Involved in the ethylmalonyl-CoA pathway for acetate assimilation. Catalyzes the reversible condensation of glyoxylate and acetyl-CoA to L-malyl-CoA and the reversible condensation of glyoxylate and propionyl-CoA to beta-methylmalyl-CoA. This Rhodobacter capsulatus (Rhodopseudomonas capsulata) protein is L-malyl-CoA/beta-methylmalyl-CoA lyase.